The following is a 409-amino-acid chain: uncharacterized protein (409 aa).

The span at 36–50 shows a compositional bias: basic and acidic residues; the sequence is HLKAKARAQESDSDR. Disordered regions lie at residues 36 to 67, 239 to 298, and 338 to 373; these read HLKAKARAQESDSDRPCSSIESSSEPASTFSS, IENT…SSTI, and RSQIKGKDSEGRRKIQRRHKKPLAEEEADPTLTGPR. The segment covering 51–67 has biased composition (low complexity); that stretch reads PCSSIESSSEPASTFSS. The span at 245-265 shows a compositional bias: basic and acidic residues; sequence VREESNQEHPPGKQEKTEKHP. Residues 268–281 are compositionally biased toward polar residues; the sequence is LQGSHQAEPETSSK. Basic and acidic residues-rich tracts occupy residues 282-294 and 338-350; these read NSEEYEKSLKMDD and RSQIKGKDSEGRR.

This is an uncharacterized protein from Homo sapiens (Human).